The primary structure comprises 214 residues: uncharacterized protein (214 aa).

The protein belongs to the HHV-5 UL130 protein family. Forms the envelope pentamer complex (PC) composed of gH, gL, UL128, UL130, and UL131A. The pentamer interacts with host NRP2.

Its subcellular location is the virion membrane. Functionally, plays a role in viral entry into host cells. Forms a pentameric complex at the surface of the viral envelope together with gH, gL, UL130 and UL131. This complex is required for entry in epithelial, endothelial and myeloid host cells. Mechanistically, engages host receptor(s) including neurophilin 2/NRP2 to mediate infection. This is an uncharacterized protein from Human cytomegalovirus (strain AD169) (HHV-5).